Here is a 154-residue protein sequence, read N- to C-terminus: Acidic phospholipase A2 1 (154 aa).

An N-terminal signal peptide occupies residues Met-1–Ala-19. Positions Ala-20 to Leu-27 are excised as a propeptide. Intrachain disulfides connect Cys-38–Cys-104, Cys-54–Cys-153, Cys-56–Cys-72, Cys-71–Cys-132, Cys-78–Cys-125, Cys-88–Cys-118, and Cys-111–Cys-123. Residues Phe-55, Gly-57, and Gly-59 each contribute to the Ca(2+) site. The active site involves His-75. Residue Asp-76 participates in Ca(2+) binding. The active site involves Asp-126.

The protein belongs to the phospholipase A2 family. Group I subfamily. D49 sub-subfamily. In terms of assembly, monomer. Ca(2+) is required as a cofactor. Expressed by the venom gland.

Its subcellular location is the secreted. The catalysed reaction is a 1,2-diacyl-sn-glycero-3-phosphocholine + H2O = a 1-acyl-sn-glycero-3-phosphocholine + a fatty acid + H(+). Functionally, snake venom phospholipase A2 (PLA2) that shows moderate enzymatic activity and exhibits procoagulant activity. PLA2 catalyzes the calcium-dependent hydrolysis of the 2-acyl groups in 3-sn-phosphoglycerides. This is Acidic phospholipase A2 1 from Pseudonaja textilis (Eastern brown snake).